The chain runs to 2262 residues: Protein Ycf2 (2262 aa).

ATP is bound at residue 1607-1614; it reads GFIGTGRS.

The protein belongs to the Ycf2 family.

It is found in the plastid. The protein resides in the chloroplast stroma. Its function is as follows. Probable ATPase of unknown function. Its presence in a non-photosynthetic plant (Epifagus virginiana) and experiments in tobacco indicate that it has an essential function which is probably not related to photosynthesis. The polypeptide is Protein Ycf2 (Nuphar advena (Common spatterdock)).